The following is a 1072-amino-acid chain: Zn(2)-C6 fungal-type transcription factor FTF1a (1072 aa).

Positions 178 to 205 (CMACRRKKIRCSGEKPACKHCLRSRILC) form a DNA-binding region, zn(2)-C6 fungal-type.

Its subcellular location is the nucleus. Zn(2)-C6 fungal-type transcription factor that has a role in the establishment of the fungus within the plant and/or the progress of the disease. Regulates the expression of virulence factors such as SIX1 and SIX6. The sequence is that of Zn(2)-C6 fungal-type transcription factor FTF1a from Fusarium oxysporum f. sp. lycopersici (strain 4287 / CBS 123668 / FGSC 9935 / NRRL 34936) (Fusarium vascular wilt of tomato).